Reading from the N-terminus, the 594-residue chain is MADLLSSLKNLSHSSGVYQYFDKNRQLLYIGKAKNLKKRIKSYFSIHNNEITPNHRASLRIQMMVKQIAFLETILVENEQDALILENSLIKQLKPKYNILLRDDKTYPYIYMDFSTDFPIPLITRKILKQPGVKYFGPFTSGAKDILDSLYELLPLVQKKNCIKDKKACMFYQIERCKAPCENKITKEEYSKIAKECLEMIENRDKLIKELELKMERLSNNLRFEEALIYRDRIAKIQKIAPFTCMDLAKLYDLDIFAFYGASNKAVLVKMFMRGGKIISSAFEKIHSLNGFDTDEAMKQAIINHYQSHLPLMPEQILLSACSNEALKELQEFISHQYSKKIALSIPKKGDKLALIEIAMKNAQEIFSQEKTSDEDLILEEVRSLFNLECVPYRVEIFDTSHHSNSQCVGGMVVYENNAFQKNSYRRYHLKGSNEYDQMSELLTRRALDFAKEPPPNLWVIDGGRAQLNIALEILKSSGSFVEVIAISKEKRDSKAYRSKGGAKDIIHTPSDTFKLLPSDKRLQWVQKLRDESHRYAINFHRSTKLKNMKQIALLKEKGIGEASVKKLLDYFGSFEAIEKASEQEKNAVLKKRI.

The GIY-YIG domain maps to His13–Ile99. Positions Asp205–Ile240 constitute a UVR domain.

This sequence belongs to the UvrC family. As to quaternary structure, interacts with UvrB in an incision complex.

It localises to the cytoplasm. Functionally, the UvrABC repair system catalyzes the recognition and processing of DNA lesions. UvrC both incises the 5' and 3' sides of the lesion. The N-terminal half is responsible for the 3' incision and the C-terminal half is responsible for the 5' incision. This Helicobacter pylori (strain HPAG1) protein is UvrABC system protein C.